Consider the following 158-residue polypeptide: Protein-export protein SecB (158 aa).

The protein belongs to the SecB family. Homotetramer, a dimer of dimers. One homotetramer interacts with 1 SecA dimer.

It localises to the cytoplasm. In terms of biological role, one of the proteins required for the normal export of preproteins out of the cell cytoplasm. It is a molecular chaperone that binds to a subset of precursor proteins, maintaining them in a translocation-competent state. It also specifically binds to its receptor SecA. The chain is Protein-export protein SecB from Rhodopseudomonas palustris (strain HaA2).